Consider the following 385-residue polypeptide: GTPase Obg (385 aa).

The region spanning 1-159 (MKFVDEVEIR…RNLKLELLLL (159 aa)) is the Obg domain. Residues 160–333 (ADVGLLGLPN…LIHDVMTLLE (174 aa)) form the OBG-type G domain. Residues 166–173 (GLPNAGKS), 191–195 (FTTLI), 213–216 (DIPG), 283–286 (NKID), and 314–316 (SAI) contribute to the GTP site. Mg(2+)-binding residues include serine 173 and threonine 193.

It belongs to the TRAFAC class OBG-HflX-like GTPase superfamily. OBG GTPase family. Monomer. Mg(2+) is required as a cofactor.

The protein resides in the cytoplasm. Functionally, an essential GTPase which binds GTP, GDP and possibly (p)ppGpp with moderate affinity, with high nucleotide exchange rates and a fairly low GTP hydrolysis rate. Plays a role in control of the cell cycle, stress response, ribosome biogenesis and in those bacteria that undergo differentiation, in morphogenesis control. This Pseudoalteromonas translucida (strain TAC 125) protein is GTPase Obg.